A 576-amino-acid polypeptide reads, in one-letter code: MAGUK p55 subfamily member 2 (576 aa).

2 consecutive L27 domains span residues 8 to 60 and 84 to 142; these read SETA…FMQQ and LEAV…YETP. Phosphoserine is present on Ser-42. Thr-141 bears the Phosphothreonine mark. Ser-145 carries the post-translational modification Phosphoserine. A PDZ domain is found at 185 to 240; that stretch reads ELVIARILHGGMVAQQGLLHVGDIIKEVNGQPVGSDPRALQELLRNASGSVILKIL. One can recognise an SH3 domain in the interval 249–317; it reads PRQVFVKCHF…PSQLLEEKRK (69 aa). Residues 374–561 enclose the Guanylate kinase-like domain; sequence RKTLVLIGAQ…TFRELQTAME (188 aa).

The protein belongs to the MAGUK family. In terms of assembly, can homomultimerise. Interacts with CACNG2. Interacts (via the SH3-Guanylate kinase-like sub-module) with DLG4/PSD95 and DLGAP1/GKAP. Interacts (via the PDZ domain) with CADM1 (via C-terminus). Interacts with KCNN2/SK2 (via N-terminal domain). Interacts with SRC. In terms of processing, phosphorylated by SRC.

It is found in the cytoplasm. Its subcellular location is the cytoskeleton. The protein localises to the membrane. The protein resides in the cell projection. It localises to the dendrite. It is found in the postsynaptic density. Functionally, postsynaptic MAGUK scaffold protein that links CADM1 cell adhesion molecules to core components of the postsynaptic density. In CA1 pyramidal neurons, required for synaptic KCNN2-containing channel function and long-term potentiation expression. Seems to negatively regulate SRC function in epithelial cells. This Homo sapiens (Human) protein is MAGUK p55 subfamily member 2.